Here is a 513-residue protein sequence, read N- to C-terminus: ATP synthase subunit alpha (513 aa).

Gly-169–Thr-176 lines the ATP pocket.

It belongs to the ATPase alpha/beta chains family. F-type ATPases have 2 components, CF(1) - the catalytic core - and CF(0) - the membrane proton channel. CF(1) has five subunits: alpha(3), beta(3), gamma(1), delta(1), epsilon(1). CF(0) has three main subunits: a(1), b(2) and c(9-12). The alpha and beta chains form an alternating ring which encloses part of the gamma chain. CF(1) is attached to CF(0) by a central stalk formed by the gamma and epsilon chains, while a peripheral stalk is formed by the delta and b chains.

Its subcellular location is the cell inner membrane. It catalyses the reaction ATP + H2O + 4 H(+)(in) = ADP + phosphate + 5 H(+)(out). Its function is as follows. Produces ATP from ADP in the presence of a proton gradient across the membrane. The alpha chain is a regulatory subunit. This chain is ATP synthase subunit alpha, found in Escherichia coli O81 (strain ED1a).